The primary structure comprises 384 residues: MKPHFRNTVERMYRDTFSYNFYNRPILSRRNTVWLCYEVKTKGPSRPPLDAKIFRGQVYSELKYHPEMRFFHWFSKWRKLHRDQEYEVTWYISWSPCTKCTRDMATFLAEDPKVTLTIFVARLYYFWDPDYQEALRSLCQKRDGPRATMKIMNYDEFQHCWSKFVYSQRELFEPWNNLPKYYILLHIMLGEILRHSMDPPTFTFNFNNEPWVRGRHETYLCYEVERMHNDTWVLLNQRRGFLCNQAPHKHGFLEGRHAELCFLDVIPFWKLDLDQDYRVTCFTSWSPCFSCAQEMAKFISKNKHVSLCIFTARIYDDQGRCQEGLRTLAEAGAKISIMTYSEFKHCWDTFVDHQGCPFQPWDGLDEHSQDLSGRLRAILQNQEN.

The tract at residues methionine 1–serine 60 is essential for cytoplasmic localization. The CMP/dCMP-type deaminase 1 domain occupies arginine 29 to leucine 138. At threonine 32 the chain carries Phosphothreonine; by PKA. (Microbial infection) Glycyl lysine isopeptide (Lys-Gly) (interchain with G-Cter in ubiquitin) cross-links involve residues lysine 42, lysine 52, and lysine 63. Residues histidine 65, cysteine 97, and cysteine 100 each coordinate Zn(2+). Residues lysine 150 and lysine 163 each participate in a (Microbial infection) Glycyl lysine isopeptide (Lys-Gly) (interchain with G-Cter in ubiquitin) cross-link. The necessary for homooligomerization stretch occupies residues glutamate 209–serine 336. The interval arginine 213–arginine 215 is interaction with DNA. One can recognise a CMP/dCMP-type deaminase 2 domain in the interval glycine 214–leucine 328. Position 218 is a phosphothreonine; by PKA and CAMK2 (threonine 218). Lysine 249 participates in a covalent cross-link: (Microbial infection) Glycyl lysine isopeptide (Lys-Gly) (interchain with G-Cter in ubiquitin). Histidine 257 contacts Zn(2+). Glutamate 259 (proton donor) is an active-site residue. Lysine 270 is covalently cross-linked ((Microbial infection) Glycyl lysine isopeptide (Lys-Gly) (interchain with G-Cter in ubiquitin)). Zn(2+) contacts are provided by cysteine 288 and cysteine 291. (Microbial infection) Glycyl lysine isopeptide (Lys-Gly) (interchain with G-Cter in ubiquitin) cross-links involve residues lysine 297, lysine 301, and lysine 303. The segment at arginine 313–arginine 320 is interaction with DNA. Residue lysine 334 forms a (Microbial infection) Glycyl lysine isopeptide (Lys-Gly) (interchain with G-Cter in ubiquitin) linkage.

This sequence belongs to the cytidine and deoxycytidylate deaminase family. In terms of assembly, homodimer. Homooligomer. Can bind RNA to form ribonucleoprotein complexes of high-molecular-mass (HMM) or low-molecular-mass (LMM). HMM is inactive and heterogeneous in protein composition because of binding nonselectively to cellular RNAs, which in turn are associated with variety of cellular proteins. The LMM form which is enzymatically active has few or no RNAs associated. Its ability to form homooligomer is distinct from its ability to assemble into HMM. Interacts with APOBEC3B, APOBEC3F, MOV10, AGO2, EIF4E, EIF4ENIF1, DCP2 and DDX6 in an RNA-dependent manner. Interacts with AGO1, AGO3 and PKA/PRKACA. As to quaternary structure, (Microbial infection) Interacts with HIV-1 Vif; promoting its ubiquitination by a cullin-5-RING E3 ubiquitin-protein ligase complex (ECS complex) hijacked by the HIV-1 Vif. (Microbial infection) Interacts with HIV-1 reverse transcriptase/ribonuclease H. In terms of assembly, (Microbial infection) Interacts with hepatitis B virus capsid protein. Requires Zn(2+) as cofactor. (Microbial infection) Following infection by HIV-1, ubiquitinated by a cullin-5-RING E3 ubiquitin-protein ligase complex (ECS complex) hijacked by the HIV-1 Vif protein, leading to its degradation. Deubiquitinated by USP49; leading to stabilization. Post-translationally, phosphorylation at Thr-32 reduces its binding to HIV-1 Vif and subsequent ubiquitination and degradation thus promoting its antiviral activity. Expressed in spleen, testes, ovary and peripheral blood leukocytes and CD4+ lymphocytes. Also expressed in non-permissive peripheral blood mononuclear cells, and several tumor cell lines; no expression detected in permissive lymphoid and non-lymphoid cell lines. Exists only in the LMM form in peripheral blood-derived resting CD4 T-cells and monocytes, both of which are refractory to HIV-1 infection. LMM is converted to a HMM complex when resting CD4 T-cells are activated or when monocytes are induced to differentiate into macrophages. This change correlates with increased susceptibility of these cells to HIV-1 infection.

It localises to the cytoplasm. The protein localises to the nucleus. It is found in the P-body. The enzyme catalyses a 2'-deoxycytidine in single-stranded DNA + H2O + H(+) = a 2'-deoxyuridine in single-stranded DNA + NH4(+). Its activity is regulated as follows. (Microbial infection) Antiviral activity is neutralized by the HIV-1 virion infectivity factor (Vif), that prevents its incorporation into progeny virions by both inhibiting its translation and/or by inducing its ubiquitination and subsequent degradation by the 26S proteasome. Can also be neutralized by simian immunodeficiency virus sooty mangabey monkey virus (SIV-sm) and chimpanzee immunodeficiency virus (SIV-cpz) Vif. Its function is as follows. DNA deaminase (cytidine deaminase) which acts as an inhibitor of retrovirus replication and retrotransposon mobility via deaminase-dependent and -independent mechanisms. Exhibits potent antiviral activity against Vif-deficient HIV-1. After the penetration of retroviral nucleocapsids into target cells of infection and the initiation of reverse transcription, it can induce the conversion of cytosine to uracil in the minus-sense single-strand viral DNA, leading to G-to-A hypermutations in the subsequent plus-strand viral DNA. The resultant detrimental levels of mutations in the proviral genome, along with a deamination-independent mechanism that works prior to the proviral integration, together exert efficient antiretroviral effects in infected target cells. Selectively targets single-stranded DNA and does not deaminate double-stranded DNA or single- or double-stranded RNA. Exhibits antiviral activity also against simian immunodeficiency viruses (SIVs), hepatitis B virus (HBV), equine infectious anemia virus (EIAV), xenotropic MuLV-related virus (XMRV) and simian foamy virus (SFV). May inhibit the mobility of LTR and non-LTR retrotransposons. The polypeptide is DNA dC-&gt;dU-editing enzyme APOBEC-3G (Homo sapiens (Human)).